The following is a 399-amino-acid chain: Nicotinate phosphoribosyltransferase (399 aa).

Histidine 221 bears the Phosphohistidine; by autocatalysis mark.

This sequence belongs to the NAPRTase family. Post-translationally, transiently phosphorylated on a His residue during the reaction cycle. Phosphorylation strongly increases the affinity for substrates and increases the rate of nicotinate D-ribonucleotide production. Dephosphorylation regenerates the low-affinity form of the enzyme, leading to product release.

It carries out the reaction nicotinate + 5-phospho-alpha-D-ribose 1-diphosphate + ATP + H2O = nicotinate beta-D-ribonucleotide + ADP + phosphate + diphosphate. It functions in the pathway cofactor biosynthesis; NAD(+) biosynthesis; nicotinate D-ribonucleotide from nicotinate: step 1/1. Functionally, catalyzes the synthesis of beta-nicotinate D-ribonucleotide from nicotinate and 5-phospho-D-ribose 1-phosphate at the expense of ATP. The chain is Nicotinate phosphoribosyltransferase from Buchnera aphidicola subsp. Acyrthosiphon pisum (strain 5A).